The sequence spans 117 residues: Immunoglobulin kappa variable 1-16 (117 aa).

The first 22 residues, 1–22 (MDMRVLAQLLGLLLLCFPGARC), serve as a signal peptide directing secretion. Residues 23 to 45 (DIQMTQSPSSLSASVGDRVTITC) form a framework-1 region. Residues 24-117 (IQMTQSPSSL…YYCQQYNSYP (94 aa)) enclose the Ig-like domain. C45 and C110 form a disulfide bridge. The interval 46 to 56 (RASQGISNYLA) is complementarity-determining-1. The interval 57–71 (WFQQKPGKAPKSLIY) is framework-2. A complementarity-determining-2 region spans residues 72 to 78 (AASSLQS). A framework-3 region spans residues 79–110 (GVPSKFSGSGSGTDFTLTISSLQPEDFATYYC). Positions 111–117 (QQYNSYP) are complementarity-determining-3.

As to quaternary structure, immunoglobulins are composed of two identical heavy chains and two identical light chains; disulfide-linked.

The protein resides in the secreted. It localises to the cell membrane. In terms of biological role, v region of the variable domain of immunoglobulin light chains that participates in the antigen recognition. Immunoglobulins, also known as antibodies, are membrane-bound or secreted glycoproteins produced by B lymphocytes. In the recognition phase of humoral immunity, the membrane-bound immunoglobulins serve as receptors which, upon binding of a specific antigen, trigger the clonal expansion and differentiation of B lymphocytes into immunoglobulins-secreting plasma cells. Secreted immunoglobulins mediate the effector phase of humoral immunity, which results in the elimination of bound antigens. The antigen binding site is formed by the variable domain of one heavy chain, together with that of its associated light chain. Thus, each immunoglobulin has two antigen binding sites with remarkable affinity for a particular antigen. The variable domains are assembled by a process called V-(D)-J rearrangement and can then be subjected to somatic hypermutations which, after exposure to antigen and selection, allow affinity maturation for a particular antigen. The sequence is that of Immunoglobulin kappa variable 1-16 from Homo sapiens (Human).